The primary structure comprises 372 residues: Protein Wnt-1 (372 aa).

The first 29 residues, 1-29 (MLKSTQVILIFILLISIVESLSWLALGLA), serve as a signal peptide directing secretion. 3 disulfide bridges follow: Cys-77–Cys-88, Cys-130–Cys-138, and Cys-140–Cys-158. Residue Asn-87 is glycosylated (N-linked (GlcNAc...) asparagine). Residue Asn-187 is glycosylated (N-linked (GlcNAc...) asparagine). 8 disulfide bridges follow: Cys-225–Cys-239, Cys-227–Cys-234, Cys-301–Cys-332, Cys-317–Cys-327, Cys-331–Cys-371, Cys-347–Cys-362, Cys-349–Cys-359, and Cys-354–Cys-355. Ser-231 is lipidated: O-palmitoleoyl serine; by mom-1.

Belongs to the Wnt family. Post-translationally, palmitoleoylation is required for efficient binding to frizzled receptors. Depalmitoleoylation leads to Wnt signaling pathway inhibition. As to expression, expressed in intestine, some head neurons and ventral nerve cord and pharyngeal neurons. Expressed in the tail and weakly expressed in the vulva and body wall muscles. Expressed highly in posterior dorsal and ventral muscle cells.

Its subcellular location is the secreted. The protein localises to the extracellular space. It localises to the extracellular matrix. It is found in the cytoplasm. The protein resides in the cell membrane. Its function is as follows. Ligand for members of the frizzled family of seven transmembrane receptors. Probable developmental protein. May be a signaling molecule which affects the development of discrete regions of tissues. Is likely to signal over only few cell diameters. Binds receptor tyrosine kinase cam-1. Together with Wnt ligand cwn-2, regulates the migration of CAN, ALM, BDU and HSN neurons during embryogenesis, the migration of QL and QR neuroblast descendants during larval development, and polarity of ALM neurons. Also acts with the Wnt ligand egl-20 to direct HSN neuron migration. Acts through the Wnt receptor cfz-2 to direct ALM migration. Also plays a role in axon growth and guidance in HSN and male CP neurons. In addition, together with Wnt ligand cwn-2, negatively regulates developmental neurite pruning of AIM neurons probably by acting as a ligand for receptor tyrosine kinase cam-1. Probably by activating the Wnt/Frizzled pathway, may regulate vulva development. May act redundantly with other Wnt ligands such as cwn-2 and mom-2 to control seam cell polarity. The protein is Protein Wnt-1 (cwn-1) of Caenorhabditis elegans.